The chain runs to 313 residues: Biotin synthase (313 aa).

The Radical SAM core domain maps to 28-258 (NFGNDIELCS…LFPQARLRLS (231 aa)). Positions 46, 50, and 53 each coordinate [4Fe-4S] cluster. Residues Cys90, Cys121, Cys181, and Arg256 each contribute to the [2Fe-2S] cluster site.

This sequence belongs to the radical SAM superfamily. Biotin synthase family. As to quaternary structure, homodimer. It depends on [4Fe-4S] cluster as a cofactor. The cofactor is [2Fe-2S] cluster.

The enzyme catalyses (4R,5S)-dethiobiotin + (sulfur carrier)-SH + 2 reduced [2Fe-2S]-[ferredoxin] + 2 S-adenosyl-L-methionine = (sulfur carrier)-H + biotin + 2 5'-deoxyadenosine + 2 L-methionine + 2 oxidized [2Fe-2S]-[ferredoxin]. Its pathway is cofactor biosynthesis; biotin biosynthesis; biotin from 7,8-diaminononanoate: step 2/2. Catalyzes the conversion of dethiobiotin (DTB) to biotin by the insertion of a sulfur atom into dethiobiotin via a radical-based mechanism. This is Biotin synthase from Francisella tularensis subsp. tularensis (strain FSC 198).